Reading from the N-terminus, the 196-residue chain is Recombination protein RecR (196 aa).

The C4-type zinc-finger motif lies at 57–72; the sequence is CERCHTFTEGAVCETC. The Toprim domain maps to 80–175; the sequence is TRLCVVETPA…HVTRLARGVP (96 aa).

The protein belongs to the RecR family.

May play a role in DNA repair. It seems to be involved in an RecBC-independent recombinational process of DNA repair. It may act with RecF and RecO. The protein is Recombination protein RecR of Acidovorax sp. (strain JS42).